A 114-amino-acid polypeptide reads, in one-letter code: Protein ORF3 (114 aa).

2 hydrophobic regions span residues 6 to 22 and 33 to 53; these read CALG…CLCC and AVVG…GLIL. The segment at 28 to 68 is interaction with host HPX; that stretch reads VSRLAAVVGGAAAVPAVVSGVTGLILSPSQSPIFIQPTPSP. The interaction with the capsid protein stretch occupies residues 48–72; that stretch reads VTGLILSPSQSPIFIQPTPSPPMSP. S71 is modified (phosphoserine; by host). The homodimerization, and interaction with host AMBP/bikunin stretch occupies residues 72-114; sequence PLRPGLDLVFANPPDHSAPLGVTRPSAPPLPHVVDLPQLGPRR. The segment at 91 to 114 is disordered; it reads LGVTRPSAPPLPHVVDLPQLGPRR. Positions 95-104 are interaction with host SRC, HCK, FYN, PIK3R3 and GRB2; that stretch reads RPSAPPLPHV. Residues 96-99 carry the PTAP/PSAP motif motif; sequence PSAP.

This sequence belongs to the hepevirus ORF3 protein family. In terms of assembly, forms homooligomers. Interacts with host SRC, HCK, FYN, PIK3R3 and GRB2 (via SH3 domain); binding does not activate the kinases. Interacts with host AMBP/bikunin and AMBP/alpha-1-microglobulin peptides. Interacts with host HPX/hemopexin. Interacts (when phosphorylated) with capsid protein ORF2. Interacts with host TSG101; this interaction plays a role in viral release from the host cell. Interacts with host SIRPA; this interaction down-regulates the phosphorylation of host IRF3. Post-translationally, palmitoylated in the N-terminus.

Its subcellular location is the host endoplasmic reticulum membrane. The protein resides in the host cytoplasm. It is found in the host cytoskeleton. It localises to the virion. The protein localises to the host cell membrane. In terms of biological role, small multifunctional phosphoprotein involved in virion morphogenesis, egress and counteracting host innate immunity. Plays critical roles in the final steps of viral release by interacting with host TSG101, a member of the vacuolar protein-sorting pathway and using other cellular host proteins involved in vesicle formation pathway. Also acts as a viroporin and forms ion conductive pores allowing viral particle release. Impairs the generation of type I interferon by down-regulating host TLR3 and TLR7 as well as their downstream signaling pathways. Down-regulates the phosphorylation of host IRF3 via the interaction with host SIRP-alpha, thereby inhibiting IFN-I expression. Interacts with host microtubules. The polypeptide is Protein ORF3 (Hepatitis E virus genotype 1 (isolate Human/Burma) (HEV-1)).